The chain runs to 128 residues: uncharacterized protein (128 aa).

Positions 2–127 constitute a VOC domain; it reads KLLQIRLLVN…DHNLIEIYKM (126 aa). Residues Glu-48 and Glu-123 each contribute to the Ni(2+) site.

Belongs to the glyoxalase I family.

This is an uncharacterized protein from Bacillus subtilis (strain 168).